Reading from the N-terminus, the 70-residue chain is Large ribosomal subunit protein bL32 (70 aa).

Positions 1-19 are enriched in basic residues; that stretch reads MAVPKKKTSPSRRGMRRSH. Residues 1–21 are disordered; the sequence is MAVPKKKTSPSRRGMRRSHQA.

This sequence belongs to the bacterial ribosomal protein bL32 family.

This Granulibacter bethesdensis (strain ATCC BAA-1260 / CGDNIH1) protein is Large ribosomal subunit protein bL32.